Consider the following 376-residue polypeptide: Transcriptional regulator STP4 (376 aa).

Disordered regions lie at residues 25-58 (QNYC…PHAS), 89-122 (SSNS…SNSS), and 137-210 (VNCI…NWKP). Low complexity-rich tracts occupy residues 32-50 (SPSP…TSPP) and 89-103 (SSNS…YSPT). Composition is skewed to polar residues over residues 146–183 (PRST…LSVK) and 191–200 (EPQNSNTIIS). Residues 241–263 (HICKYCERGFARPNDLFRHVKCH) form a C2H2-type zinc finger.

The protein localises to the nucleus. In terms of biological role, probable transcription factor involved in response to cell wall damage. The protein is Transcriptional regulator STP4 (STP4) of Candida albicans (strain SC5314 / ATCC MYA-2876) (Yeast).